We begin with the raw amino-acid sequence, 354 residues long: Rhodopsin (354 aa).

Topologically, residues M1–A36 are extracellular. 2 N-linked (GlcNAc...) asparagine glycosylation sites follow: N2 and N15. The chain crosses the membrane as a helical span at residues Y37–V61. Residues T62–N73 are Cytoplasmic-facing. A helical membrane pass occupies residues Y74 to Y96. The Extracellular segment spans residues T97–C110. A disulfide bond links C110 and C187. The chain crosses the membrane as a helical span at residues N111–F133. A 'Ionic lock' involved in activated form stabilization motif is present at residues E134–W136. The Cytoplasmic segment spans residues E134–H152. Residues A153–V173 traverse the membrane as a helical segment. Topologically, residues G174–S202 are extracellular. The chain crosses the membrane as a helical span at residues F203 to G224. The Cytoplasmic portion of the chain corresponds to R225–R252. The chain crosses the membrane as a helical span at residues M253–Y274. Topologically, residues I275–V286 are extracellular. The helical transmembrane segment at F287–C308 threads the bilayer. The residue at position 296 (K296) is an N6-(retinylidene)lysine. The Cytoplasmic portion of the chain corresponds to M309–A354. Residues C322 and C323 are each lipidated (S-palmitoyl cysteine). Residues G333–A354 form a disordered region. Residues A334–A354 show a composition bias toward low complexity.

Belongs to the G-protein coupled receptor 1 family. Opsin subfamily. In terms of processing, phosphorylated on some or all of the serine and threonine residues present in the C-terminal region. Contains one covalently linked retinal chromophore.

It localises to the membrane. The protein resides in the cell projection. Its subcellular location is the cilium. It is found in the photoreceptor outer segment. Functionally, photoreceptor required for image-forming vision at low light intensity. While most salt water fish species use retinal as chromophore, most freshwater fish use 3-dehydroretinal, or a mixture of retinal and 3-dehydroretinal. Light-induced isomerization of 11-cis to all-trans retinal triggers a conformational change that activates signaling via G-proteins. Subsequent receptor phosphorylation mediates displacement of the bound G-protein alpha subunit by arrestin and terminates signaling. The sequence is that of Rhodopsin (rho) from Cyprinus carpio (Common carp).